The sequence spans 276 residues: 4-deoxy-L-threo-5-hexosulose-uronate ketol-isomerase 2 (276 aa).

Residues H194, H196, E201, and H243 each contribute to the Zn(2+) site.

Belongs to the KduI family. It depends on Zn(2+) as a cofactor.

It catalyses the reaction 5-dehydro-4-deoxy-D-glucuronate = 3-deoxy-D-glycero-2,5-hexodiulosonate. The protein operates within glycan metabolism; pectin degradation; 2-dehydro-3-deoxy-D-gluconate from pectin: step 4/5. Functionally, catalyzes the isomerization of 5-dehydro-4-deoxy-D-glucuronate to 3-deoxy-D-glycero-2,5-hexodiulosonate. The polypeptide is 4-deoxy-L-threo-5-hexosulose-uronate ketol-isomerase 2 (kduI2) (Enterococcus faecalis (strain ATCC 700802 / V583)).